The following is a 571-amino-acid chain: NADH-quinone oxidoreductase subunit C/D (571 aa).

The tract at residues 1-171 (MQASEKTLNE…NLSNTMNYRR (171 aa)) is NADH dehydrogenase I subunit C. Positions 194-571 (AQVVLNWGPL…LDPVVGEVDR (378 aa)) are NADH dehydrogenase I subunit D.

It in the N-terminal section; belongs to the complex I 30 kDa subunit family. In the C-terminal section; belongs to the complex I 49 kDa subunit family. NDH-1 is composed of 13 different subunits. Subunits NuoB, CD, E, F, and G constitute the peripheral sector of the complex.

It is found in the cell inner membrane. The enzyme catalyses a quinone + NADH + 5 H(+)(in) = a quinol + NAD(+) + 4 H(+)(out). Its function is as follows. NDH-1 shuttles electrons from NADH, via FMN and iron-sulfur (Fe-S) centers, to quinones in the respiratory chain. The immediate electron acceptor for the enzyme in this species is believed to be ubiquinone. Couples the redox reaction to proton translocation (for every two electrons transferred, four hydrogen ions are translocated across the cytoplasmic membrane), and thus conserves the redox energy in a proton gradient. The protein is NADH-quinone oxidoreductase subunit C/D (nuoC) of Hydrogenobaculum sp. (strain Y04AAS1).